We begin with the raw amino-acid sequence, 171 residues long: Probable deoxyuridine 5'-triphosphate nucleotidohydrolase (171 aa).

It belongs to the dCTP deaminase family. Archaeal dUTPase subfamily.

It carries out the reaction dUTP + H2O = dUMP + diphosphate + H(+). It functions in the pathway pyrimidine metabolism; dUMP biosynthesis; dUMP from dCTP (dUTP route): step 2/2. Functionally, this enzyme is involved in nucleotide metabolism: it produces dUMP, the immediate precursor of thymidine nucleotides and it decreases the intracellular concentration of dUTP so that uracil cannot be incorporated into DNA. This chain is Probable deoxyuridine 5'-triphosphate nucleotidohydrolase, found in Methanosarcina barkeri (strain Fusaro / DSM 804).